Consider the following 289-residue polypeptide: MRILEKAPAKINLSLDVTRKRPDGYHEVEMIMTTIDLADRIELTELAEDEVRVSSHNRFVPDDQRNLAYQAAKLIKDRYNVKKGVSIMITKVIPVAAGLAGGSSDAAATLRGLNRLWNLNLSAETLAELGAEIGSDVSFCVYGGTALATGRGEKIKHISTPPHCWVILAKPTIGVSTAEVYRALKLDGIEHPDVQGMIEAIEEKSFQKMCSRLGNVLESVTLDMHPEVAMIKNQMKRFGADAVLMSGSGPTVFGLVQYESKVQRIYNGLRGFCDQVYAVRMIGEQNALD.

Lysine 10 is a catalytic residue. 94 to 104 (PVAAGLAGGSS) lines the ATP pocket. The active site involves aspartate 136.

This sequence belongs to the GHMP kinase family. IspE subfamily.

It catalyses the reaction 4-CDP-2-C-methyl-D-erythritol + ATP = 4-CDP-2-C-methyl-D-erythritol 2-phosphate + ADP + H(+). Its pathway is isoprenoid biosynthesis; isopentenyl diphosphate biosynthesis via DXP pathway; isopentenyl diphosphate from 1-deoxy-D-xylulose 5-phosphate: step 3/6. Its function is as follows. Catalyzes the phosphorylation of the position 2 hydroxy group of 4-diphosphocytidyl-2C-methyl-D-erythritol. In Bacillus subtilis (strain 168), this protein is 4-diphosphocytidyl-2-C-methyl-D-erythritol kinase (ispE).